The chain runs to 497 residues: Serine hydroxymethyltransferase (497 aa).

Residues L176 and 180–182 contribute to the (6S)-5,6,7,8-tetrahydrofolate site; that span reads GHL. N6-(pyridoxal phosphate)lysine is present on K289.

It belongs to the SHMT family. As to quaternary structure, homodimer. The cofactor is pyridoxal 5'-phosphate.

It is found in the cytoplasm. It catalyses the reaction (6R)-5,10-methylene-5,6,7,8-tetrahydrofolate + glycine + H2O = (6S)-5,6,7,8-tetrahydrofolate + L-serine. The protein operates within one-carbon metabolism; tetrahydrofolate interconversion. Its pathway is amino-acid biosynthesis; glycine biosynthesis; glycine from L-serine: step 1/1. In terms of biological role, catalyzes the reversible interconversion of serine and glycine with tetrahydrofolate (THF) serving as the one-carbon carrier. This reaction serves as the major source of one-carbon groups required for the biosynthesis of purines, thymidylate, methionine, and other important biomolecules. Also exhibits THF-independent aldolase activity toward beta-hydroxyamino acids, producing glycine and aldehydes, via a retro-aldol mechanism. The polypeptide is Serine hydroxymethyltransferase (Chlamydia caviae (strain ATCC VR-813 / DSM 19441 / 03DC25 / GPIC) (Chlamydophila caviae)).